Consider the following 341-residue polypeptide: tRNA N6-adenosine threonylcarbamoyltransferase (341 aa).

The Fe cation site is built by H117 and H121. Substrate is bound by residues 140-144 (VVSGG), D173, G186, and N278. D306 contacts Fe cation.

Belongs to the KAE1 / TsaD family. Fe(2+) is required as a cofactor.

The protein localises to the cytoplasm. The catalysed reaction is L-threonylcarbamoyladenylate + adenosine(37) in tRNA = N(6)-L-threonylcarbamoyladenosine(37) in tRNA + AMP + H(+). In terms of biological role, required for the formation of a threonylcarbamoyl group on adenosine at position 37 (t(6)A37) in tRNAs that read codons beginning with adenine. Is involved in the transfer of the threonylcarbamoyl moiety of threonylcarbamoyl-AMP (TC-AMP) to the N6 group of A37, together with TsaE and TsaB. TsaD likely plays a direct catalytic role in this reaction. This is tRNA N6-adenosine threonylcarbamoyltransferase from Symbiobacterium thermophilum (strain DSM 24528 / JCM 14929 / IAM 14863 / T).